The sequence spans 44 residues: Large ribosomal subunit protein bL34 (44 aa).

The protein belongs to the bacterial ribosomal protein bL34 family.

The chain is Large ribosomal subunit protein bL34 from Buchnera aphidicola subsp. Cinara cedri (strain Cc).